Consider the following 168-residue polypeptide: Quinol oxidase subunit 2 (168 aa).

A helical membrane pass occupies residues 9–31 (EVWFIVMLVLVLIFFSWNVYYLS).

Belongs to the cytochrome c oxidase subunit 2 family.

The protein localises to the cell membrane. It catalyses the reaction 2 a quinol + O2 = 2 a quinone + 2 H2O. Functionally, the terminal oxidase is the component of the respiratory chain that catalyzes the reduction of oxygen to water. Subunits 1-3 form the functional core of the enzyme complex. In terms of biological role, subunit 2 transfers the electrons from caldariella quinol to the bimetallic center of the catalytic subunit 1 that is formed by heme A3 and Cu(B). This chain is Quinol oxidase subunit 2 (soxA), found in Sulfolobus acidocaldarius (strain ATCC 33909 / DSM 639 / JCM 8929 / NBRC 15157 / NCIMB 11770).